A 316-amino-acid polypeptide reads, in one-letter code: 4-diphosphocytidyl-2-C-methyl-D-erythritol kinase (316 aa).

The active site involves Lys11. 99–109 (PVAAGLAGGST) is a binding site for ATP. Residue Asp141 is part of the active site.

The protein belongs to the GHMP kinase family. IspE subfamily.

The enzyme catalyses 4-CDP-2-C-methyl-D-erythritol + ATP = 4-CDP-2-C-methyl-D-erythritol 2-phosphate + ADP + H(+). It functions in the pathway isoprenoid biosynthesis; isopentenyl diphosphate biosynthesis via DXP pathway; isopentenyl diphosphate from 1-deoxy-D-xylulose 5-phosphate: step 3/6. In terms of biological role, catalyzes the phosphorylation of the position 2 hydroxy group of 4-diphosphocytidyl-2C-methyl-D-erythritol. In Gloeothece citriformis (strain PCC 7424) (Cyanothece sp. (strain PCC 7424)), this protein is 4-diphosphocytidyl-2-C-methyl-D-erythritol kinase.